The chain runs to 198 residues: WKDDIKIDQEAVKAYVGGEFKPNAGAHAGRDWGKFDIEAEVVGLCPTGCMTYESGTLSIDNKNCTRCMHCINTMPRALKIGDERGASILVGAKAPVLDGAQMGSLLIPFIAAEEPFDEVKEVIENIWEWWMEEGKNRERLGETMKRVGFQKLLEVTGTKAVPQHVSEPRHNPYIFFKEEEVPGGWSRDISDYRKRHMR.

Residues Cys-45, Cys-64, Cys-67, and Cys-70 each coordinate [4Fe-4S] cluster. Positions 55-83 (GTLSIDNKNCTRCMHCINTMPRALKIGDE) constitute a 4Fe-4S ferredoxin-type domain.

Heterohexamer of two alpha, two beta and two gamma subunits.

Part of the complex that catalyzes the reduction of sulfite to sulfide. The alpha and beta subunits may have arisen by gene duplication. They both bind 2 iron-sulfur clusters, but the alpha subunit seems to be catalytically inactive, due to substitutions along the putative substrate access channel, and because it binds sirohydrochlorin (the dematallated form of siroheme) instead of siroheme. This Megalodesulfovibrio gigas (strain ATCC 19364 / DSM 1382 / NCIMB 9332 / VKM B-1759) (Desulfovibrio gigas) protein is Sulfite reductase, dissimilatory-type subunit alpha (dsrA).